A 374-amino-acid chain; its full sequence is Putative glutamate--cysteine ligase 2 (374 aa).

It belongs to the glutamate--cysteine ligase type 2 family. YbdK subfamily.

The catalysed reaction is L-cysteine + L-glutamate + ATP = gamma-L-glutamyl-L-cysteine + ADP + phosphate + H(+). Its function is as follows. ATP-dependent carboxylate-amine ligase which exhibits weak glutamate--cysteine ligase activity. This Paracidovorax citrulli (strain AAC00-1) (Acidovorax citrulli) protein is Putative glutamate--cysteine ligase 2.